The chain runs to 132 residues: Protein FasE (132 aa).

The chain is Protein FasE (fasE) from Escherichia coli.